Here is a 410-residue protein sequence, read N- to C-terminus: Peptidase T (410 aa).

Histidine 79 contributes to the Zn(2+) binding site. Aspartate 81 is an active-site residue. A Zn(2+)-binding site is contributed by aspartate 142. Glutamate 176 (proton acceptor) is an active-site residue. The Zn(2+) site is built by glutamate 177, aspartate 199, and histidine 381.

It belongs to the peptidase M20B family. It depends on Zn(2+) as a cofactor.

It localises to the cytoplasm. It catalyses the reaction Release of the N-terminal residue from a tripeptide.. In terms of biological role, cleaves the N-terminal amino acid of tripeptides. The protein is Peptidase T of Geobacillus sp. (strain WCH70).